Consider the following 209-residue polypeptide: Thymidine kinase (209 aa).

ATP is bound by residues 9 to 16 (SAMNAGKT) and 88 to 91 (DEAQ). Glutamate 89 (proton acceptor) is an active-site residue.

It belongs to the thymidine kinase family. As to quaternary structure, homotetramer.

Its subcellular location is the cytoplasm. It catalyses the reaction thymidine + ATP = dTMP + ADP + H(+). The protein is Thymidine kinase of Xanthomonas axonopodis pv. citri (strain 306).